The following is a 302-amino-acid chain: Genetic interactor of prohibitin 7, mitochondrial (302 aa).

A mitochondrion-targeting transit peptide spans 1-21; sequence MLSQYLRKHHLLSRRHQFMRC. A disordered region spans residues 20–44; sequence RCASQSRSPPRSLLQRQAKRRGEAE. Residues 236 to 253 form a helical membrane-spanning segment; the sequence is GTRIIAWLGILIVMIASV. Residues 264-290 form a disordered region; that stretch reads ATVKVSEFTEQETSEPQAAQQDTAPIS. Residues 277–290 are compositionally biased toward polar residues; the sequence is SEPQAAQQDTAPIS.

It belongs to the GEP7 family.

The protein localises to the mitochondrion membrane. In terms of biological role, involved in respiratory growth and required for cell survival in the absence of prohibitins. In Lachancea thermotolerans (strain ATCC 56472 / CBS 6340 / NRRL Y-8284) (Yeast), this protein is Genetic interactor of prohibitin 7, mitochondrial (GEP7).